The sequence spans 150 residues: Flagellar assembly factor FliW (150 aa).

The protein belongs to the FliW family. Interacts with translational regulator CsrA and flagellin(s).

Its subcellular location is the cytoplasm. In terms of biological role, acts as an anti-CsrA protein, binds CsrA and prevents it from repressing translation of its target genes, one of which is flagellin. Binds to flagellin and participates in the assembly of the flagellum. The polypeptide is Flagellar assembly factor FliW (Leptospira borgpetersenii serovar Hardjo-bovis (strain JB197)).